The sequence spans 238 residues: Enolase-phosphatase E1 (238 aa).

The Mg(2+) site is built by Asp14 and Glu16. Substrate is bound by residues 128–129 and Lys165; that span reads SS. Asp192 lines the Mg(2+) pocket.

This sequence belongs to the HAD-like hydrolase superfamily. MasA/MtnC family. Monomer. Requires Mg(2+) as cofactor.

It is found in the cytoplasm. The protein localises to the nucleus. It catalyses the reaction 5-methylsulfanyl-2,3-dioxopentyl phosphate + H2O = 1,2-dihydroxy-5-(methylsulfanyl)pent-1-en-3-one + phosphate. The protein operates within amino-acid biosynthesis; L-methionine biosynthesis via salvage pathway; L-methionine from S-methyl-5-thio-alpha-D-ribose 1-phosphate: step 3/6. It participates in amino-acid biosynthesis; L-methionine biosynthesis via salvage pathway; L-methionine from S-methyl-5-thio-alpha-D-ribose 1-phosphate: step 4/6. Functionally, bifunctional enzyme that catalyzes the enolization of 2,3-diketo-5-methylthiopentyl-1-phosphate (DK-MTP-1-P) into the intermediate 2-hydroxy-3-keto-5-methylthiopentenyl-1-phosphate (HK-MTPenyl-1-P), which is then dephosphorylated to form the acireductone 1,2-dihydroxy-3-keto-5-methylthiopentene (DHK-MTPene). This chain is Enolase-phosphatase E1, found in Fusarium vanettenii (strain ATCC MYA-4622 / CBS 123669 / FGSC 9596 / NRRL 45880 / 77-13-4) (Fusarium solani subsp. pisi).